Consider the following 366-residue polypeptide: Uroporphyrinogen decarboxylase (366 aa).

Substrate-binding positions include 28-32 (RQAGR), aspartate 78, tyrosine 160, threonine 215, and histidine 333.

Belongs to the uroporphyrinogen decarboxylase family. Homodimer.

It localises to the cytoplasm. The catalysed reaction is uroporphyrinogen III + 4 H(+) = coproporphyrinogen III + 4 CO2. The protein operates within porphyrin-containing compound metabolism; protoporphyrin-IX biosynthesis; coproporphyrinogen-III from 5-aminolevulinate: step 4/4. Functionally, catalyzes the decarboxylation of four acetate groups of uroporphyrinogen-III to yield coproporphyrinogen-III. This chain is Uroporphyrinogen decarboxylase, found in Paraburkholderia phytofirmans (strain DSM 17436 / LMG 22146 / PsJN) (Burkholderia phytofirmans).